A 231-amino-acid polypeptide reads, in one-letter code: Cytidylate kinase (231 aa).

18–26 (GPSGTGKSS) contributes to the ATP binding site.

Belongs to the cytidylate kinase family. Type 1 subfamily.

The protein localises to the cytoplasm. The enzyme catalyses CMP + ATP = CDP + ADP. It carries out the reaction dCMP + ATP = dCDP + ADP. The polypeptide is Cytidylate kinase (Streptomyces coelicolor (strain ATCC BAA-471 / A3(2) / M145)).